Here is a 37-residue protein sequence, read N- to C-terminus: Large ribosomal subunit protein bL36 (37 aa).

The protein belongs to the bacterial ribosomal protein bL36 family.

This chain is Large ribosomal subunit protein bL36, found in Methylibium petroleiphilum (strain ATCC BAA-1232 / LMG 22953 / PM1).